The following is a 381-amino-acid chain: Homoserine O-succinyltransferase (381 aa).

The AB hydrolase-1 domain maps to 45 to 360 (NAVLVCHALN…PHGHDAFLLD (316 aa)). Residue Ser151 is the Nucleophile of the active site. Arg221 contributes to the substrate binding site. Residues Asp321 and His354 contribute to the active site. Asp355 contributes to the substrate binding site.

The protein belongs to the AB hydrolase superfamily. MetX family. In terms of assembly, homodimer.

It is found in the cytoplasm. The enzyme catalyses L-homoserine + succinyl-CoA = O-succinyl-L-homoserine + CoA. Its pathway is amino-acid biosynthesis; L-methionine biosynthesis via de novo pathway; O-succinyl-L-homoserine from L-homoserine: step 1/1. In terms of biological role, transfers a succinyl group from succinyl-CoA to L-homoserine, forming succinyl-L-homoserine. The chain is Homoserine O-succinyltransferase from Burkholderia pseudomallei (strain 1710b).